Here is a 289-residue protein sequence, read N- to C-terminus: MFSIFNIWGTFNKVLFFLSLTVSLAGLVGNALLLWHLGLHIKKGPFNTYLLHLAAADFLFLSCQVGFSIATIVSGHEDTLYFPVTFLWFAVGLWLLAAFSVDCCLAYMFPSFCSPNRRPRFTSVVLCLVIWALTMPAVLLPANACGLLKNGMSLLVCLKYHWTSVTWLAVLSGMACGASKFLLIFGNCCSSQPPPKFCKLAQCSGILLFFCRLPLVVYWCLRPVLKFLLPFFFPLATLLACIDSSAKPLLYYMKGRQLRKDPLQVALNRALGEESQSGLGGLSLPMHQV.

Over methionine 1–lysine 13 the chain is Extracellular. Residues valine 14 to leucine 34 form a helical membrane-spanning segment. The Cytoplasmic segment spans residues tryptophan 35 to histidine 52. Residues leucine 53–valine 73 form a helical membrane-spanning segment. Over serine 74–aspartate 78 the chain is Extracellular. Residues threonine 79–phenylalanine 99 traverse the membrane as a helical segment. At serine 100 to arginine 120 the chain is on the cytoplasmic side. A helical membrane pass occupies residues phenylalanine 121 to proline 141. The Extracellular segment spans residues alanine 142–serine 164. A helical membrane pass occupies residues valine 165–phenylalanine 185. Residues glycine 186–lysine 199 lie on the Cytoplasmic side of the membrane. A helical transmembrane segment spans residues leucine 200 to cysteine 220. Topologically, residues leucine 221–arginine 222 are extracellular. The helical transmembrane segment at proline 223–aspartate 243 threads the bilayer. Residues serine 244–valine 289 lie on the Cytoplasmic side of the membrane.

It belongs to the G-protein coupled receptor 1 family. Mas subfamily.

The protein resides in the cell membrane. Functionally, orphan receptor. May regulate nociceptor function and/or development, including the sensation or modulation of pain. This is Mas-related G-protein coupled receptor member G (Mrgprg) from Mus musculus (Mouse).